A 108-amino-acid chain; its full sequence is Nucleoid-associated protein Bmul_1447/BMULJ_01796 (108 aa).

Residues 84 to 108 (EATSQEKMSGMTSGLPLPPGFKLPF) form a disordered region. Over residues 85–95 (ATSQEKMSGMT) the composition is skewed to polar residues. Residues 99–108 (PLPPGFKLPF) show a composition bias toward pro residues.

Belongs to the YbaB/EbfC family. As to quaternary structure, homodimer.

It localises to the cytoplasm. The protein localises to the nucleoid. Its function is as follows. Binds to DNA and alters its conformation. May be involved in regulation of gene expression, nucleoid organization and DNA protection. This is Nucleoid-associated protein Bmul_1447/BMULJ_01796 from Burkholderia multivorans (strain ATCC 17616 / 249).